The following is a 91-amino-acid chain: Putative transmembrane protein ORF91a (91 aa).

3 helical membrane passes run 17-37, 40-60, and 69-89; these read TGIS…VGLA, AFLG…LLFM, and GIGF…YIST.

It is found in the host membrane. The protein is Putative transmembrane protein ORF91a of Acidianus convivator (ABV).